Consider the following 374-residue polypeptide: Glutamate 5-kinase (374 aa).

Residue K9 coordinates ATP. Substrate contacts are provided by S49, D136, and N148. ATP-binding positions include 168 to 169 (TD) and 210 to 216 (TGGMRSK). In terms of domain architecture, PUA spans 276–354 (SGTITVDSGA…EEARQYSYLH (79 aa)).

Belongs to the glutamate 5-kinase family.

Its subcellular location is the cytoplasm. It catalyses the reaction L-glutamate + ATP = L-glutamyl 5-phosphate + ADP. It functions in the pathway amino-acid biosynthesis; L-proline biosynthesis; L-glutamate 5-semialdehyde from L-glutamate: step 1/2. Functionally, catalyzes the transfer of a phosphate group to glutamate to form L-glutamate 5-phosphate. The protein is Glutamate 5-kinase of Geobacillus thermodenitrificans (strain NG80-2).